A 508-amino-acid polypeptide reads, in one-letter code: TATA box-binding protein-like 1 (508 aa).

Disordered stretches follow at residues 145–190 (QISY…QMHH), 236–262 (EPIP…PMPD), and 456–479 (QKKR…FDDS).

Belongs to the TBP family.

The protein resides in the nucleus. May be a general transcription factor. Plays an essential role for RNA polymerase II/ama-1 transcription in early embryos whereby it activates a subset of RNA polymerase II promoters and facilitates the reestablishment of transcription after mitosis. This chain is TATA box-binding protein-like 1, found in Caenorhabditis elegans.